Reading from the N-terminus, the 203-residue chain is Ribosomal RNA large subunit methyltransferase E (203 aa).

S-adenosyl-L-methionine contacts are provided by Gly-59, Trp-61, Asp-79, Asp-97, and Asp-119. Lys-159 functions as the Proton acceptor in the catalytic mechanism.

This sequence belongs to the class I-like SAM-binding methyltransferase superfamily. RNA methyltransferase RlmE family.

The protein localises to the cytoplasm. The enzyme catalyses uridine(2552) in 23S rRNA + S-adenosyl-L-methionine = 2'-O-methyluridine(2552) in 23S rRNA + S-adenosyl-L-homocysteine + H(+). Its function is as follows. Specifically methylates the uridine in position 2552 of 23S rRNA at the 2'-O position of the ribose in the fully assembled 50S ribosomal subunit. This is Ribosomal RNA large subunit methyltransferase E from Desulforapulum autotrophicum (strain ATCC 43914 / DSM 3382 / VKM B-1955 / HRM2) (Desulfobacterium autotrophicum).